Reading from the N-terminus, the 506-residue chain is NAD(P)H-quinone oxidoreductase chain 4, chloroplastic (506 aa).

A run of 14 helical transmembrane segments spans residues F5–L25, W35–K55, M88–I108, L114–D134, I135–L155, F168–F188, A209–F229, H243–I263, V275–T295, S309–L329, G331–G351, S386–L406, F415–L435, and I463–T483.

Belongs to the complex I subunit 4 family.

It localises to the plastid. Its subcellular location is the chloroplast thylakoid membrane. It catalyses the reaction a plastoquinone + NADH + (n+1) H(+)(in) = a plastoquinol + NAD(+) + n H(+)(out). The enzyme catalyses a plastoquinone + NADPH + (n+1) H(+)(in) = a plastoquinol + NADP(+) + n H(+)(out). This chain is NAD(P)H-quinone oxidoreductase chain 4, chloroplastic, found in Chaetosphaeridium globosum (Charophycean green alga).